Here is a 434-residue protein sequence, read N- to C-terminus: Elongation factor 1-alpha (434 aa).

The tr-type G domain maps to 5-232; sequence KPHINLVVIG…DNVHPPKRPV (228 aa). A G1 region spans residues 14–21; it reads GHVVAGKS. Residue 14–21 coordinates GTP; sequence GHVVAGKS. Positions 70-74 are G2; the sequence is GITID. A G3 region spans residues 91–94; the sequence is DAPG. GTP is bound by residues 91–95 and 153–156; these read DAPGH and NKMD. The tract at residues 153–156 is G4; it reads NKMD. Residues 196-198 form a G5 region; the sequence is SGF.

The protein belongs to the TRAFAC class translation factor GTPase superfamily. Classic translation factor GTPase family. EF-Tu/EF-1A subfamily.

It localises to the cytoplasm. Functionally, this protein promotes the GTP-dependent binding of aminoacyl-tRNA to the A-site of ribosomes during protein biosynthesis. The chain is Elongation factor 1-alpha from Blastocystis hominis.